A 75-amino-acid polypeptide reads, in one-letter code: RNA-binding protein KhpA (75 aa).

A KH domain is found at 29-75 (SIILELKVSPEDMGKVIGKQGRIAKAIRTVVKAAAIKENKKVVVEII).

This sequence belongs to the KhpA RNA-binding protein family. In terms of assembly, forms a complex with KhpB.

The protein resides in the cytoplasm. A probable RNA chaperone. Forms a complex with KhpB which binds to cellular RNA and controls its expression. Plays a role in peptidoglycan (PG) homeostasis and cell length regulation. The polypeptide is RNA-binding protein KhpA (Clostridium perfringens (strain 13 / Type A)).